We begin with the raw amino-acid sequence, 406 residues long: Sensor histidine kinase YxjM (406 aa).

The Cytoplasmic segment spans residues 1–13; that stretch reads MNGQTPARHYYKK. A helical membrane pass occupies residues 14–34; sequence LVPSLILILNCIQFLSHPTKA. Topologically, residues 35–36 are extracellular; it reads DP. A helical membrane pass occupies residues 37–57; that stretch reads ILLAFVFAVYLAFIWIIPYVA. Position 58 (Ser58) is a topological domain, cytoplasmic. The next 2 helical transmembrane spans lie at 59–79 and 80–100; these read TAVSLSIFIGLWLLTDFFWAV and SGQEQGAAYFLIVFLMIYAAF. A topological domain (cytoplasmic) is located at residue Arg101. The chain crosses the membrane as a helical span at residues 102-122; sequence LPSRLSLIFTACLIGGNILLL. Over 123–125 the chain is Extracellular; that stretch reads SSQ. A helical membrane pass occupies residues 126 to 146; it reads GGSLNTIISNISIMLGLYVLF. Residues 147 to 406 are Cytoplasmic-facing; it reads SSMRFRREAR…TNKEQKDEQR (260 aa). In terms of domain architecture, Histidine kinase spans 209-396; sequence DIHDSIGHEL…KIELSLPLMT (188 aa). Phosphohistidine; by autocatalysis is present on His211.

The protein resides in the cell membrane. It catalyses the reaction ATP + protein L-histidine = ADP + protein N-phospho-L-histidine.. In terms of biological role, probable member of the two-component regulatory system YxjM/YxjL. May activate YxjL by phosphorylation. This chain is Sensor histidine kinase YxjM (yxjM), found in Bacillus subtilis (strain 168).